Reading from the N-terminus, the 4303-residue chain is Polycystin-1 (4303 aa).

Positions 1–23 (MPPAAPARLALALGLGLWLGALA) are cleaved as a signal peptide. The region spanning 24–67 (GGPGRGCGPCEPPCLCGPAPGAACRVNCSGRGLRTLGPALRIPA) is the LRRNT domain. The Extracellular segment spans residues 24-3074 (GGPGRGCGPC…VFPEPTADVN (3051 aa)). Asn-50 and Asn-89 each carry an N-linked (GlcNAc...) asparagine glycan. LRR repeat units lie at residues 68-91 (DATALDVSHNLLRALDVGLLANLS) and 92-113 (ALAELDISNNKISTLEEGIFAN). 2 N-linked (GlcNAc...) asparagine glycosylation sites follow: Asn-116 and Asn-121. The 54-residue stretch at 125-178 (NPFECDCGLAWLPRWAEEQQVRVVQPEAATCAGPGSLAGQPLLGIPLLDSGCGE) folds into the LRRCT domain. Residues 177–271 (GEEYVACLPD…PTLLQHVFPA (95 aa)) enclose the WSC domain. N-linked (GlcNAc...) asparagine glycosylation occurs at Asn-187. The PKD 1 domain occupies 272–359 (SPGATLVGPH…VQVEAAPAAL (88 aa)). Residues 415–531 (GNGHCYRLVV…CSAPHSYVCE (117 aa)) enclose the C-type lectin domain. 2 disulfides stabilise this stretch: Cys-436/Cys-530 and Cys-508/Cys-522. The disordered stretch occupies residues 616-635 (AGTPENGSEPESRSPDNRTQ). Residues Asn-621 and Asn-632 are each glycosylated (N-linked (GlcNAc...) asparagine). The 34-residue stretch at 638-671 (PACMPGGRWCPGANICLPLDASCHPQACANGCTS) folds into the LDL-receptor class A; atypical domain. Intrachain disulfides connect Cys-640/Cys-653, Cys-647/Cys-665, and Cys-660/Cys-669. The PKD 2 domain occupies 743 to 817 (LSANASSWLP…RHNLSCSFDV (75 aa)). Asn-746, Asn-810, Asn-841, Asn-854, Asn-890, Asn-921, Asn-1004, Asn-1010, Asn-1034, Asn-1072, Asn-1113, Asn-1178, Asn-1194, Asn-1240, Asn-1269, Asn-1336, Asn-1348, Asn-1382, Asn-1450, Asn-1455, Asn-1474, Asn-1518, Asn-1541, Asn-1554, Asn-1563, Asn-1647, Asn-1661, Asn-1733, Asn-1791, Asn-1834, Asn-1867, and Asn-1880 each carry an N-linked (GlcNAc...) asparagine glycan. PKD domains are found at residues 855 to 928 (ATAT…RVTA), 935 to 1020 (LRAT…NRMQ), 1023 to 1129 (QVST…LPSV), 1127 to 1215 (PSVA…LRGL), 1213 to 1298 (RGLS…EVLR), 1294 to 1383 (LEVL…VGNV), 1382 to 1469 (NVTL…VLVT), 1468 to 1551 (VTSI…VRGL), 1550 to 1635 (GLVV…IEGL), 1634 to 1721 (GLQV…VGWL), 1719 to 1805 (GWLM…VSGL), 1807 to 1890 (IRAS…IVGL), 1889 to 1974 (GLVL…VSGL), 1977 to 2057 (PNCC…VLEV), and 2060 to 2148 (AVQY…ACRE). Asn-1991, Asn-2050, Asn-2074, Asn-2125, Asn-2248, Asn-2353, Asn-2395, Asn-2412, Asn-2567, Asn-2578, Asn-2645, Asn-2718, Asn-2754, Asn-2841, Asn-2878, Asn-2925, Asn-2956, and Asn-2994 each carry an N-linked (GlcNAc...) asparagine glycan. The 688-residue stretch at 2146 to 2833 (CREPEVDVVL…QLIFLVDSNP (688 aa)) folds into the REJ domain. The region spanning 2862-3063 (PIERLASERA…SLFVPPSHVR (202 aa)) is the GAIN-B domain. Cys-3015 and Cys-3043 are joined by a disulfide. Residues 3015–3063 (CQYFSEEDMVWRTEGLLPLEETSPRQAVCLTRHLTAFGASLFVPPSHVR) are GPS. The chain crosses the membrane as a helical span at residues 3075-3095 (YIVMLTCAVCLVTYMVMAAIL). The Cytoplasmic portion of the chain corresponds to 3096-3277 (HKLDQLDASR…DRPPRSRFTR (182 aa)). One can recognise a PLAT domain in the interval 3118-3233 (FKYEILVKTG…EANGGLVEKE (116 aa)). Residues 3278–3298 (IQRATCCVLLICLFLGANAVW) traverse the membrane as a helical segment. Topologically, residues 3299–3323 (YGAVGDSAYSTGHVSRLSPLSVDTV) are extracellular. The helical transmembrane segment at 3324–3344 (AVGLVSSVVVYPVYLAILFLF) threads the bilayer. Residues 3345-3559 (RMSRSKVAGS…LPAWCASLAH (215 aa)) lie on the Cytoplasmic side of the membrane. The chain crosses the membrane as a helical span at residues 3560 to 3580 (GLSLLLVAVAVAVSGWVGASF). The Extracellular segment spans residues 3581-3582 (PP). The chain crosses the membrane as a helical span at residues 3583–3603 (GVSVAWLLSSSASFLASFLGW). Over 3604 to 3665 (EPLKVLLEAL…LAKEEARKVK (62 aa)) the chain is Cytoplasmic. A helical membrane pass occupies residues 3666–3686 (RLHGMLRSLLVYMLFLLVTLL). Topologically, residues 3687–3901 (ASYGDASCHG…RLSAGLSLPL (215 aa)) are extracellular. N-linked (GlcNAc...) asparagine glycans are attached at residues Asn-3738, Asn-3790, and Asn-3845. Residues 3902-3922 (LTSVCLLLFAVHFAVAEARTW) form a helical membrane-spanning segment. At 3923–3935 (HREGRWRVLRLGA) the chain is on the cytoplasmic side. Residues 3936–3956 (WARWLLVALTAATALVRLAQL) traverse the membrane as a helical segment. Topologically, residues 3957–3984 (GAADRQWTRFVRGRPRRFTSFDQVAQLS) are extracellular. A helical membrane pass occupies residues 3985–4005 (SAARGLAASLLFLLLVKAAQQ). The Cytoplasmic portion of the chain corresponds to 4006–4027 (LRFVRQWSVFGKTLCRALPELL). Residues 4028-4048 (GVTLGLVVLGVAYAQLAILLV) traverse the membrane as a helical segment. Over 4049–4090 (SSCVDSLWSVAQALLVLCPGTGLSTLCPAESWHLSPLLCVGL) the chain is Extracellular. The helical transmembrane segment at 4091–4110 (WALRLWGALRLGAVILRWRY) threads the bilayer. The Cytoplasmic segment spans residues 4111-4303 (HALRGELYRP…AKNKVHPSST (193 aa)). Disordered stretches follow at residues 4160–4196 (PLPSRSSRGSKVSPDVPPPSAGSDASHPSTSSSQLDG) and 4243–4303 (LHSL…PSST). Ser-4166 is subject to Phosphoserine; by PRKX; in vitro. Residues 4185–4195 (SHPSTSSSQLD) show a composition bias toward polar residues. Residues 4220 to 4251 (EALLTQFDRLNQATEDVYQLEQQLHSLQGRRS) adopt a coiled-coil conformation. The segment covering 4253-4269 (RAPAGSSRGPSPGLRPA) has biased composition (low complexity). Positions 4292-4303 (LRAKNKVHPSST) are enriched in basic residues.

This sequence belongs to the polycystin family. As to quaternary structure, component of the heterotetrameric polycystin channel complex with PKD2; the tetramer contains one PKD1 chain and three PKD2 chains. Interacts with PKD2; the interaction is required for ciliary localization. Interacts with PKD2L1. Interacts with PRKX; involved in differentiation and controlled morphogenesis of the kidney. Interacts (via extracellular domain) with WNT3A, WNT4, WNT5A and WNT9B. Interacts with DVL1 and DVL2. Interacts with NPHP1 (via SH3 domain). Interacts with BBS1, BBS4, BBS5 and TTC8. Interacts with RGS7. Interacts (via the PKD repeats in the N-terminal extracellular region) with EPCIP; the interaction is not dependent on N-glycosylation of either protein. Post-translationally, N-glycosylated. In terms of processing, after synthesis, undergoes cleavage between Leu-3048 and Thr-3049 in the GPS region of the GAIN-B domain. Cleavage at the GPS region occurs through a cis-autoproteolytic mechanism involving an ester-intermediate via N-O acyl rearrangement. This process takes place in the early secretory pathway, depends on initial N-glycosylation, and requires the REJ domain. There is evidence that cleavage at GPS region is incomplete. Uncleaved and cleaved products may have different functions in vivo.

It is found in the cell membrane. It localises to the cell projection. The protein localises to the cilium. Its subcellular location is the endoplasmic reticulum. The protein resides in the golgi apparatus. It is found in the vesicle. It localises to the secreted. The protein localises to the extracellular exosome. In terms of biological role, component of a heteromeric calcium-permeable ion channel formed by PKD1 and PKD2 that is activated by interaction between PKD1 and a Wnt family member, such as WNT3A and WNT9B. Both PKD1 and PKD2 are required for channel activity. Involved in renal tubulogenesis. Involved in fluid-flow mechanosensation by the primary cilium in renal epithelium. Acts as a regulator of cilium length, together with PKD2. The dynamic control of cilium length is essential in the regulation of mechanotransductive signaling. The cilium length response creates a negative feedback loop whereby fluid shear-mediated deflection of the primary cilium, which decreases intracellular cAMP, leads to cilium shortening and thus decreases flow-induced signaling. May be an ion-channel regulator. Involved in adhesive protein-protein and protein-carbohydrate interactions. Likely to be involved with polycystin-1-interacting protein 1 in the detection, sequestration and exocytosis of senescent mitochondria. The polypeptide is Polycystin-1 (Homo sapiens (Human)).